Reading from the N-terminus, the 268-residue chain is Inositol polyphosphate multikinase (268 aa).

ATP-binding positions include K27, 86–88 (ENI), and D99. 127–135 (TSGSLGFRI) provides a ligand contact to substrate. Position 235 (D235) interacts with ATP.

This sequence belongs to the inositol phosphokinase (IPK) family.

The protein localises to the cytoplasm. Its subcellular location is the nucleus. The enzyme catalyses 1D-myo-inositol 1,4,5-trisphosphate + 2 ATP = 1D-myo-inositol 1,3,4,5,6-pentakisphosphate + 2 ADP + 2 H(+). It carries out the reaction 1D-myo-inositol 1,4,5-trisphosphate + ATP = 1D-myo-inositol 1,4,5,6-tetrakisphosphate + ADP + H(+). The catalysed reaction is 1D-myo-inositol 1,4,5-trisphosphate + ATP = 1D-myo-inositol 1,3,4,5-tetrakisphosphate + ADP + H(+). It catalyses the reaction 1D-myo-inositol 1,4,5,6-tetrakisphosphate + ATP = 1D-myo-inositol 1,3,4,5,6-pentakisphosphate + ADP + H(+). In terms of biological role, inositol phosphate kinase with both monophosphoinositol and diphosphoinositol polyphosphate synthase activities. Able to phosphorylate inositol 1,4,5-trisphosphate (Ins(1,4,5)P3) on both the carbon-3 and carbon-6 positions to synthesize inositol 1,3,4,5-tetrakisphosphate (Ins(1,3,4,5)P4) and inositol 1,4,5,6-tetrakisphosphate (Ins(1,4,5,6)P4), and then to subsequently phosphorylate and convert either isomer of InsP4 to inositol 1,3,4,5,6-pentakisphosphate (Ins(1,3,4,5,6)P5). Also converts (Ins(1,3,4,5,6)P5) to InsP6. Also has a role in transcription regulation. The catalytic activity is required for PHO gene repression by phosphate and for NCR gene activation in response to nitrogen availability, indicating a role for inositol pyrophosphates in these controls. Inositol polyphosphates may be involved in the regulation of chromatin remodeling of transcription. This chain is Inositol polyphosphate multikinase (arg82), found in Schizosaccharomyces pombe (strain 972 / ATCC 24843) (Fission yeast).